The sequence spans 330 residues: Ketol-acid reductoisomerase (NADP(+)) (330 aa).

The KARI N-terminal Rossmann domain occupies Leu-3–Thr-184. Residues Tyr-26–Gln-29, Ser-52, and Ser-54 contribute to the NADP(+) site. The active site involves His-109. Gly-135 contributes to the NADP(+) binding site. The region spanning Ser-185 to Glu-329 is the KARI C-terminal knotted domain. Asp-193, Glu-197, Glu-229, and Glu-233 together coordinate Mg(2+). Ser-254 contributes to the substrate binding site.

Belongs to the ketol-acid reductoisomerase family. Requires Mg(2+) as cofactor.

It carries out the reaction (2R)-2,3-dihydroxy-3-methylbutanoate + NADP(+) = (2S)-2-acetolactate + NADPH + H(+). The catalysed reaction is (2R,3R)-2,3-dihydroxy-3-methylpentanoate + NADP(+) = (S)-2-ethyl-2-hydroxy-3-oxobutanoate + NADPH + H(+). It functions in the pathway amino-acid biosynthesis; L-isoleucine biosynthesis; L-isoleucine from 2-oxobutanoate: step 2/4. It participates in amino-acid biosynthesis; L-valine biosynthesis; L-valine from pyruvate: step 2/4. In terms of biological role, involved in the biosynthesis of branched-chain amino acids (BCAA). Catalyzes an alkyl-migration followed by a ketol-acid reduction of (S)-2-acetolactate (S2AL) to yield (R)-2,3-dihydroxy-isovalerate. In the isomerase reaction, S2AL is rearranged via a Mg-dependent methyl migration to produce 3-hydroxy-3-methyl-2-ketobutyrate (HMKB). In the reductase reaction, this 2-ketoacid undergoes a metal-dependent reduction by NADPH to yield (R)-2,3-dihydroxy-isovalerate. The chain is Ketol-acid reductoisomerase (NADP(+)) from Helicobacter acinonychis (strain Sheeba).